The primary structure comprises 125 residues: MADIKALVEELSKLTVLEAAELAKALEEEWGVSAAAAVAVAGPAGGGDAAAPAEEKDEFDVILTGDGGKKIQVIKEVRAITGLGLTEAKGLVEGAPKPIKEGVNKAEAEEIKGKIEAAGGTVELK.

The protein belongs to the bacterial ribosomal protein bL12 family. In terms of assembly, homodimer. Part of the ribosomal stalk of the 50S ribosomal subunit. Forms a multimeric L10(L12)X complex, where L10 forms an elongated spine to which 2 to 4 L12 dimers bind in a sequential fashion. Binds GTP-bound translation factors.

Its function is as follows. Forms part of the ribosomal stalk which helps the ribosome interact with GTP-bound translation factors. Is thus essential for accurate translation. This Erythrobacter litoralis (strain HTCC2594) protein is Large ribosomal subunit protein bL12.